The chain runs to 153 residues: D-aminoacyl-tRNA deacylase (153 aa).

A Gly-cisPro motif, important for rejection of L-amino acids motif is present at residues glycine 137 to proline 138.

The protein belongs to the DTD family. As to quaternary structure, homodimer.

The protein resides in the cytoplasm. The enzyme catalyses glycyl-tRNA(Ala) + H2O = tRNA(Ala) + glycine + H(+). The catalysed reaction is a D-aminoacyl-tRNA + H2O = a tRNA + a D-alpha-amino acid + H(+). Functionally, an aminoacyl-tRNA editing enzyme that deacylates mischarged D-aminoacyl-tRNAs. Also deacylates mischarged glycyl-tRNA(Ala), protecting cells against glycine mischarging by AlaRS. Acts via tRNA-based rather than protein-based catalysis; rejects L-amino acids rather than detecting D-amino acids in the active site. By recycling D-aminoacyl-tRNA to D-amino acids and free tRNA molecules, this enzyme counteracts the toxicity associated with the formation of D-aminoacyl-tRNA entities in vivo and helps enforce protein L-homochirality. The protein is D-aminoacyl-tRNA deacylase of Myxococcus xanthus (strain DK1622).